Reading from the N-terminus, the 240-residue chain is Uridylate kinase (240 aa).

Position 12–15 (12–15 (KLSG)) interacts with ATP. Residues 20–25 (GKQGFG) form an involved in allosteric activation by GTP region. Gly-54 contacts UMP. ATP is bound by residues Gly-55 and Arg-59. Residues Asp-74 and 135-142 (TGNPYFST) each bind UMP. ATP contacts are provided by Asn-163, Tyr-169, and Asp-172.

Belongs to the UMP kinase family. Homohexamer.

The protein localises to the cytoplasm. It carries out the reaction UMP + ATP = UDP + ADP. The protein operates within pyrimidine metabolism; CTP biosynthesis via de novo pathway; UDP from UMP (UMPK route): step 1/1. Its activity is regulated as follows. Allosterically activated by GTP. Inhibited by UTP. In terms of biological role, catalyzes the reversible phosphorylation of UMP to UDP. The chain is Uridylate kinase from Geobacillus thermodenitrificans (strain NG80-2).